Consider the following 185-residue polypeptide: Homeobox expressed in ES cells 1 (185 aa).

Residues 32 to 69 are disordered; sequence KKDCTTSVRPHRPWTDTCGDSEKGGNPPLHAPDLPSET. The homeobox DNA-binding region spans 108-167; it reads GRRPRTAFTQNQVEVLENVFRVNCYPGIDIREDLAQKLNLEEDRIQIWFQNRRAKMKRSR.

Belongs to the ANF homeobox family. As to quaternary structure, can form heterodimers with PROP1 in binding to DNA Interacts with TLE1. In terms of tissue distribution, high levels found in the embryonic liver, lower level expression seen in the viscera, amnion and yolk sac.

The protein localises to the nucleus. Required for the normal development of the forebrain, eyes and other anterior structures such as the olfactory placodes and pituitary gland. Possible transcriptional repressor. Binds to the palindromic PIII sequence, 5'-AGCTTGAGTCTAATTGAATTAACTGTAC-3'. HESX1 and PROP1 bind as heterodimers on this palindromic site, and, in vitro, HESX1 can antagonize PROP1 activation. This is Homeobox expressed in ES cells 1 (Hesx1) from Mus musculus (Mouse).